A 235-amino-acid chain; its full sequence is Cytochrome c oxidase subunit 2 (235 aa).

Over 1 to 14 the chain is Mitochondrial intermembrane; sequence MPYPMQLGFQDATS. A helical membrane pass occupies residues 15–45; it reads PIMEELMYFHDHTLMIVFLISSLVLYIIILM. Residues 46–59 are Mitochondrial matrix-facing; that stretch reads LTTKLTHTSTMDAQ. The chain crosses the membrane as a helical span at residues 60-87; that stretch reads EVETIWTILPAVILILIALPSLRILYMM. Topologically, residues 88–235 are mitochondrial intermembrane; sequence DEIYNPYLTV…MQSFLSYLYI (148 aa). Positions 161, 196, 198, 200, 204, and 207 each coordinate Cu cation. Residue Glu198 coordinates Mg(2+). Position 218 is a phosphotyrosine (Tyr218).

The protein belongs to the cytochrome c oxidase subunit 2 family. Component of the cytochrome c oxidase (complex IV, CIV), a multisubunit enzyme composed of 14 subunits. The complex is composed of a catalytic core of 3 subunits MT-CO1, MT-CO2 and MT-CO3, encoded in the mitochondrial DNA, and 11 supernumerary subunits COX4I, COX5A, COX5B, COX6A, COX6B, COX6C, COX7A, COX7B, COX7C, COX8 and NDUFA4, which are encoded in the nuclear genome. The complex exists as a monomer or a dimer and forms supercomplexes (SCs) in the inner mitochondrial membrane with NADH-ubiquinone oxidoreductase (complex I, CI) and ubiquinol-cytochrome c oxidoreductase (cytochrome b-c1 complex, complex III, CIII), resulting in different assemblies (supercomplex SCI(1)III(2)IV(1) and megacomplex MCI(2)III(2)IV(2)). Found in a complex with TMEM177, COA6, COX18, COX20, SCO1 and SCO2. Interacts with TMEM177 in a COX20-dependent manner. Interacts with COX20. Interacts with COX16. Requires Cu cation as cofactor.

It is found in the mitochondrion inner membrane. The catalysed reaction is 4 Fe(II)-[cytochrome c] + O2 + 8 H(+)(in) = 4 Fe(III)-[cytochrome c] + 2 H2O + 4 H(+)(out). In terms of biological role, component of the cytochrome c oxidase, the last enzyme in the mitochondrial electron transport chain which drives oxidative phosphorylation. The respiratory chain contains 3 multisubunit complexes succinate dehydrogenase (complex II, CII), ubiquinol-cytochrome c oxidoreductase (cytochrome b-c1 complex, complex III, CIII) and cytochrome c oxidase (complex IV, CIV), that cooperate to transfer electrons derived from NADH and succinate to molecular oxygen, creating an electrochemical gradient over the inner membrane that drives transmembrane transport and the ATP synthase. Cytochrome c oxidase is the component of the respiratory chain that catalyzes the reduction of oxygen to water. Electrons originating from reduced cytochrome c in the intermembrane space (IMS) are transferred via the dinuclear copper A center (CU(A)) of subunit 2 and heme A of subunit 1 to the active site in subunit 1, a binuclear center (BNC) formed by heme A3 and copper B (CU(B)). The BNC reduces molecular oxygen to 2 water molecules using 4 electrons from cytochrome c in the IMS and 4 protons from the mitochondrial matrix. This chain is Cytochrome c oxidase subunit 2 (MT-CO2), found in Didelphis virginiana (North American opossum).